A 215-amino-acid polypeptide reads, in one-letter code: Porin MspC (215 aa).

An N-terminal signal peptide occupies residues 1–31; the sequence is MKAISRVLIAMISALAAAVAGLFVSAGTSHA.

Belongs to the mycobacterial porin (TC 1.B.24) family. As to quaternary structure, octamers. Probably forms a goblet with the wide end on the exterior of the outer membrane and a central channel. It is not known if mixed oligomers of MspC with other Msp subunits form in vivo.

The protein localises to the cell outer membrane. The protein resides in the secreted. It is found in the cell wall. In terms of biological role, a constitutively expressed secondary porin, forms a water-filled channel which favors the permeation of cations and less efficiently phosphate. There are about 2400 porins in wild-type, 800 in an mspA deletion and 150 in a double mspA-mspC deletion. This Mycolicibacterium smegmatis (strain ATCC 700084 / mc(2)155) (Mycobacterium smegmatis) protein is Porin MspC (mspC).